A 181-amino-acid chain; its full sequence is ATP-dependent protease subunit HslV (181 aa).

The active site involves threonine 7. Alanine 166, cysteine 169, and threonine 172 together coordinate Na(+).

It belongs to the peptidase T1B family. HslV subfamily. In terms of assembly, a double ring-shaped homohexamer of HslV is capped on each side by a ring-shaped HslU homohexamer. The assembly of the HslU/HslV complex is dependent on binding of ATP.

Its subcellular location is the cytoplasm. It catalyses the reaction ATP-dependent cleavage of peptide bonds with broad specificity.. Its activity is regulated as follows. Allosterically activated by HslU binding. Protease subunit of a proteasome-like degradation complex believed to be a general protein degrading machinery. The polypeptide is ATP-dependent protease subunit HslV (Anaeromyxobacter dehalogenans (strain 2CP-1 / ATCC BAA-258)).